The chain runs to 2195 residues: Integrator complex subunit 1 (2195 aa).

Residues 1 to 86 (MNRAKPTTVR…RPKLSSTPPL (86 aa)) are disordered. Phosphoserine is present on serine 13. A compositionally biased stretch (polar residues) spans 34–45 (GQASESKTTSTL). Lysine 47 carries the post-translational modification N6-acetyllysine. Residues 62-75 (SASLSGTSALTGLT) show a composition bias toward low complexity. A Phosphothreonine modification is found at threonine 83. Serine 87 bears the Phosphoserine mark. A disordered region spans residues 267-297 (LLQGEGARSGGELGAGSSPHPSLTEEEDSQT). Phosphoserine is present on residues serine 307 and serine 926. Positions 923 to 947 (STASGEEDDEGESREQKAKKRQRQQ) are disordered. The chain crosses the membrane as a helical span at residues 1165-1185 (HILVVHAMVILLTLGPPRSGD). The interval 1313 to 1347 (SLPPRRDSTEAPKPESSPEPPPGQGRTRAGTQVPV) is disordered. Over residues 1316–1325 (PRRDSTEAPK) the composition is skewed to basic and acidic residues. Serine 1320, serine 1328, and serine 1329 each carry phosphoserine.

The protein belongs to the Integrator subunit 1 family. Component of the Integrator complex, composed of core subunits INTS1, INTS2, INTS3, INTS4, INTS5, INTS6, INTS7, INTS8, INTS9/RC74, INTS10, INTS11/CPSF3L, INTS12, INTS13, INTS14 and INTS15. The core complex associates with protein phosphatase 2A subunits PPP2CA and PPP2R1A, to form the Integrator-PP2A (INTAC) complex. Interacts with ESRRB, ESRRB is not a core component of the Integrator complex and this association is a bridge for the interaction with the multiprotein complex Integrator; attracts the transcriptional machinery.

The protein localises to the nucleus. Its subcellular location is the nucleus membrane. Functionally, component of the integrator complex, a multiprotein complex that terminates RNA polymerase II (Pol II) transcription in the promoter-proximal region of genes. The integrator complex provides a quality checkpoint during transcription elongation by driving premature transcription termination of transcripts that are unfavorably configured for transcriptional elongation: the complex terminates transcription by (1) catalyzing dephosphorylation of the C-terminal domain (CTD) of Pol II subunit POLR2A/RPB1 and SUPT5H/SPT5, (2) degrading the exiting nascent RNA transcript via endonuclease activity and (3) promoting the release of Pol II from bound DNA. The integrator complex is also involved in terminating the synthesis of non-coding Pol II transcripts, such as enhancer RNAs (eRNAs), small nuclear RNAs (snRNAs), telomerase RNAs and long non-coding RNAs (lncRNAs). Within the integrator complex, INTS1 is involved in the post-termination step: INTS1 displaces INTS3 and the SOSS factors, allowing the integrator complex to return to the closed conformation, ready to bind to the paused elongation complex for another termination cycle. Mediates recruitment of cytoplasmic dynein to the nuclear envelope, probably as component of the integrator complex. This is Integrator complex subunit 1 from Mus musculus (Mouse).